A 94-amino-acid chain; its full sequence is Pyrimidine/purine nucleoside phosphorylase (94 aa).

It belongs to the nucleoside phosphorylase PpnP family.

It carries out the reaction a purine D-ribonucleoside + phosphate = a purine nucleobase + alpha-D-ribose 1-phosphate. It catalyses the reaction adenosine + phosphate = alpha-D-ribose 1-phosphate + adenine. The enzyme catalyses cytidine + phosphate = cytosine + alpha-D-ribose 1-phosphate. The catalysed reaction is guanosine + phosphate = alpha-D-ribose 1-phosphate + guanine. It carries out the reaction inosine + phosphate = alpha-D-ribose 1-phosphate + hypoxanthine. It catalyses the reaction thymidine + phosphate = 2-deoxy-alpha-D-ribose 1-phosphate + thymine. The enzyme catalyses uridine + phosphate = alpha-D-ribose 1-phosphate + uracil. The catalysed reaction is xanthosine + phosphate = alpha-D-ribose 1-phosphate + xanthine. Functionally, catalyzes the phosphorolysis of diverse nucleosides, yielding D-ribose 1-phosphate and the respective free bases. Can use uridine, adenosine, guanosine, cytidine, thymidine, inosine and xanthosine as substrates. Also catalyzes the reverse reactions. This Escherichia fergusonii (strain ATCC 35469 / DSM 13698 / CCUG 18766 / IAM 14443 / JCM 21226 / LMG 7866 / NBRC 102419 / NCTC 12128 / CDC 0568-73) protein is Pyrimidine/purine nucleoside phosphorylase.